We begin with the raw amino-acid sequence, 126 residues long: Holo-[acyl-carrier-protein] synthase (126 aa).

Mg(2+)-binding residues include aspartate 9 and glutamate 58.

It belongs to the P-Pant transferase superfamily. AcpS family. Mg(2+) serves as cofactor.

Its subcellular location is the cytoplasm. It carries out the reaction apo-[ACP] + CoA = holo-[ACP] + adenosine 3',5'-bisphosphate + H(+). In terms of biological role, transfers the 4'-phosphopantetheine moiety from coenzyme A to a Ser of acyl-carrier-protein. This Buchnera aphidicola subsp. Cinara cedri (strain Cc) protein is Holo-[acyl-carrier-protein] synthase.